The following is an 88-amino-acid chain: Small ribosomal subunit protein bS20 (88 aa).

It belongs to the bacterial ribosomal protein bS20 family.

Functionally, binds directly to 16S ribosomal RNA. The polypeptide is Small ribosomal subunit protein bS20 (Clostridium novyi (strain NT)).